The sequence spans 337 residues: GDP-mannose transporter 1 (337 aa).

Topologically, residues 1-16 (MSELKTGHAGHNPWAS) are cytoplasmic. A helical transmembrane segment spans residues 17–37 (VANSGPISILSYCGSSILMTV). Residues 38–51 (TNKFVVNLKDFNMN) lie on the Lumenal side of the membrane. A helical membrane pass occupies residues 52–72 (FVMLFVQSLVCTITLIILRIL). The Cytoplasmic portion of the chain corresponds to 73–92 (GYAKFRSLNKTDAKNWFPIS). A helical membrane pass occupies residues 93-113 (FLLVLMIYTSSKALQYLAVPI). The Lumenal segment spans residues 114–119 (YTIFKN). N-linked (GlcNAc...) asparagine glycosylation is present at Asn119. The chain crosses the membrane as a helical span at residues 120–140 (LTIILIAYGEVLFFGGSVTSM). Topologically, residues 141 to 144 (ELSS) are cytoplasmic. Residues 145 to 165 (FLLMVLSSVVATWGDQQAVAA) form a helical membrane-spanning segment. At 166–180 (KAASLAEGAAGAVAS) the chain is on the lumenal side. The chain crosses the membrane as a helical span at residues 181–201 (FNPGYFWMFTNCITSALFVLI). The Cytoplasmic segment spans residues 202–215 (MRKRIKLTNFKDFD). Residues 216–236 (TMFYNNVLALPILLLFSFCVE) form a helical membrane-spanning segment. At 237–252 (DWSSVNLTNNFSNDSL) the chain is on the lumenal side. N-linked (GlcNAc...) asparagine glycans are attached at residues Asn242, Asn246, and Asn249. The chain crosses the membrane as a helical span at residues 253 to 273 (TAMIISGVASVGISYCSGWCV). The Cytoplasmic segment spans residues 274–279 (RVTSST). Residues 280 to 300 (TYSMVGALNKLPIALSGLIFF) traverse the membrane as a helical segment. Topologically, residues 301–304 (DAPR) are lumenal. The helical transmembrane segment at 305-325 (NFLSILSIFIGFLSGIIYAVA) threads the bilayer. Residues 326-337 (KQKKQQAQPLRK) are Cytoplasmic-facing.

This sequence belongs to the TPT transporter family. SLC35D subfamily. In terms of assembly, homooligomer.

Its subcellular location is the golgi apparatus membrane. The protein localises to the cytoplasmic vesicle membrane. It is found in the endoplasmic reticulum membrane. Involved in the import of GDP-mannose from the cytoplasm into the Golgi lumen. Defective copy causes severe glycosylation defect and abnormal retention of soluble endoplasmic reticulum proteins. Involved in vanadate sensitivity. This is GDP-mannose transporter 1 (VRG4) from Saccharomyces cerevisiae (strain YJM789) (Baker's yeast).